Consider the following 150-residue polypeptide: Anthrone oxygenase gedH (150 aa).

Transmembrane regions (helical) follow at residues 1–21 (MANP…PVFL), 41–61 (GHKL…WVAA), 73–93 (PVLA…CMVS), and 128–148 (LFPL…LVGG).

The protein belongs to the anthrone oxygenase family.

It localises to the membrane. It catalyses the reaction emodin anthrone + O2 = emodin + H2O + H(+). The protein operates within secondary metabolite biosynthesis. Functionally, anthrone oxygenase; part of the gene cluster that mediates the biosynthesis of geodin, an intermediate in the biosynthesis of other natural products. The pathway begins with the synthesis of atrochrysone thioester by the polyketide synthase (PKS) gedC. The atrochrysone carboxyl ACP thioesterase gedB then breaks the thioester bond and releases the atrochrysone carboxylic acid from gedC. The atrochrysone carboxylic acid is then converted to atrochrysone which is further transformed into emodin anthrone. The next step is performed by the emodin anthrone oxygenase gedH that catalyzes the oxidation of emodinanthrone to emodin. Emodin O-methyltransferase encoded probably by gedA then catalyzes methylation of the 8-hydroxy group of emodin to form questin. Ring cleavage of questin by questin oxidase gedK leads to desmethylsulochrin via several intermediates including questin epoxide. Another methylation step probably catalyzed by methyltransferase gedG leads to the formation of sulochrin which is further converted to dihydrogeodin by the sulochrin halogenase gedL. Finally, the dihydrogeodin oxidase gedJ catalyzes the stereospecific phenol oxidative coupling reaction converting dihydrogeodin to geodin. This Aspergillus terreus (strain NIH 2624 / FGSC A1156) protein is Anthrone oxygenase gedH.